The primary structure comprises 487 residues: MNTSTFATPLRAMFAQRHDAAPAVVRPYDVSLILLALSLMAIGLVIVTSASMPVASRLFDNPFHFAIRHGIYIVLAIGAALTVMQIPMQWWRTSNAWLLLLGLVLLIAVLLVGRSVNGSTRWLAIGPITIQAAEPAKLFFFCYLAGYLVRRYEEVTENIKGFAKPLVVFFAFAVLLLLQPDLGTVVVMLCTTIGLLFLAGAKLWQFFGLAFTGGAAVTFLIMFEEYRMKRITSFLDPWADPFGSGYQLTQSLMAYGRGDVFGQGLGNSLQKLEYLPEAHTDFIMAILAEELGFAGVLTVLALMLCIVLKAMKMGSKALQNERPFDAYLAYSIGIWFSFQTAVNVGASAGILPTKGLTFPLLSYGGSSLIIMAAAVGLLVRIDFEMRVEGIQAIDRSGKAKASTSSSRKNKPKTASSAGKKKVSTVLDDVAYAVVDDVQDEEQDIDSIMDDFAQDESAQTVSHQTKRASKSTSKTPRGKDEEQEDGYV.

Transmembrane regions (helical) follow at residues 30–50 (VSLILLALSLMAIGLVIVTSA), 71–91 (IYIVLAIGAALTVMQIPMQWW), 93–113 (TSNAWLLLLGLVLLIAVLLVG), 122–142 (WLAIGPITIQAAEPAKLFFFC), 167–187 (VVFFAFAVLLLLQPDLGTVVV), 203–223 (LWQFFGLAFTGGAAVTFLIMF), 282–302 (FIMAILAEELGFAGVLTVLAL), 332–352 (IGIWFSFQTAVNVGASAGILP), and 358–378 (FPLLSYGGSSLIIMAAAVGLL). 2 disordered regions span residues 398-419 (KAKASTSSSRKNKPKTASSAGK) and 444-487 (IDSI…DGYV). A compositionally biased stretch (polar residues) spans 401–416 (ASTSSSRKNKPKTASS). A compositionally biased stretch (acidic residues) spans 444-453 (IDSIMDDFAQ).

It belongs to the SEDS family. FtsW subfamily.

It localises to the cell inner membrane. It catalyses the reaction [GlcNAc-(1-&gt;4)-Mur2Ac(oyl-L-Ala-gamma-D-Glu-L-Lys-D-Ala-D-Ala)](n)-di-trans,octa-cis-undecaprenyl diphosphate + beta-D-GlcNAc-(1-&gt;4)-Mur2Ac(oyl-L-Ala-gamma-D-Glu-L-Lys-D-Ala-D-Ala)-di-trans,octa-cis-undecaprenyl diphosphate = [GlcNAc-(1-&gt;4)-Mur2Ac(oyl-L-Ala-gamma-D-Glu-L-Lys-D-Ala-D-Ala)](n+1)-di-trans,octa-cis-undecaprenyl diphosphate + di-trans,octa-cis-undecaprenyl diphosphate + H(+). It functions in the pathway cell wall biogenesis; peptidoglycan biosynthesis. Functionally, peptidoglycan polymerase that is essential for cell division. The polypeptide is Probable peptidoglycan glycosyltransferase FtsW (Pseudoalteromonas atlantica (strain T6c / ATCC BAA-1087)).